The following is a 910-amino-acid chain: Valine--tRNA ligase (910 aa).

The 'HIGH' region motif lies at 45-55; it reads PNVTGSLHMGH. A 'KMSKS' region motif is present at residues 554-558; the sequence is KMSKS. Lys557 contributes to the ATP binding site. Positions 842–910 form a coiled coil; the sequence is DLQAEAARLA…TAESRIRDAS (69 aa).

The protein belongs to the class-I aminoacyl-tRNA synthetase family. ValS type 1 subfamily. As to quaternary structure, monomer.

The protein localises to the cytoplasm. It catalyses the reaction tRNA(Val) + L-valine + ATP = L-valyl-tRNA(Val) + AMP + diphosphate. Catalyzes the attachment of valine to tRNA(Val). As ValRS can inadvertently accommodate and process structurally similar amino acids such as threonine, to avoid such errors, it has a 'posttransfer' editing activity that hydrolyzes mischarged Thr-tRNA(Val) in a tRNA-dependent manner. This chain is Valine--tRNA ligase, found in Brucella suis biovar 1 (strain 1330).